The following is a 259-amino-acid chain: MFGLIHNPPHAGRLPAAATTLVEARGLTVRRGDQPVLCNVDLVVESGQVVTLVGPNGSGKSTLVQVLTGVIRDYRGQVGRRTGLRVGYVPQHFRIDRNLPITVRRFMKLAPRGRRGHWAEAVADAGVSQLLDRPMQGLSGGELRRVLLARALLSRPHLLALDEPAAGLDQRGQGELYRLIRHVRDRYGCGVLVVSHDLNLVMAATDQVLCLSEGHILCRGAPESVRAHPEYRALFGAHLGPETAVFPHAHGPGEGCTHG.

Positions 22–238 (VEARGLTVRR…PEYRALFGAH (217 aa)) constitute an ABC transporter domain. 54–61 (GPNGSGKS) is a binding site for ATP.

It belongs to the ABC transporter superfamily. Zinc importer (TC 3.A.1.15.5) family. As to quaternary structure, the complex is composed of two ATP-binding proteins (ZnuC), two transmembrane proteins (ZnuB) and a solute-binding protein (ZnuA).

It localises to the cell inner membrane. It catalyses the reaction Zn(2+)(out) + ATP(in) + H2O(in) = Zn(2+)(in) + ADP(in) + phosphate(in) + H(+)(in). In terms of biological role, part of the ABC transporter complex ZnuABC involved in zinc import. Responsible for energy coupling to the transport system. The sequence is that of Zinc import ATP-binding protein ZnuC from Alkalilimnicola ehrlichii (strain ATCC BAA-1101 / DSM 17681 / MLHE-1).